The primary structure comprises 209 residues: Probable nicotinate-nucleotide adenylyltransferase (209 aa).

The protein belongs to the NadD family.

The enzyme catalyses nicotinate beta-D-ribonucleotide + ATP + H(+) = deamido-NAD(+) + diphosphate. It functions in the pathway cofactor biosynthesis; NAD(+) biosynthesis; deamido-NAD(+) from nicotinate D-ribonucleotide: step 1/1. Its function is as follows. Catalyzes the reversible adenylation of nicotinate mononucleotide (NaMN) to nicotinic acid adenine dinucleotide (NaAD). The chain is Probable nicotinate-nucleotide adenylyltransferase from Streptococcus pneumoniae serotype 4 (strain ATCC BAA-334 / TIGR4).